The primary structure comprises 486 residues: Recombining binding protein suppressor of hairless (486 aa).

2 DNA-binding regions span residues 43 to 53 (QKSYGNEKRFF) and 151 to 156 (SKPSKK). Position 161 is an N6-acetyllysine (K161). Residues 178 to 183 (RLRSQT) form a DNA-binding region. In terms of domain architecture, IPT/TIG spans 341-431 (PVVESLQLNG…YSTSLTFTYT (91 aa)). Residues 451 to 467 (SSQVPPNESNTNSEGSY) show a composition bias toward polar residues. A disordered region spans residues 451-486 (SSQVPPNESNTNSEGSYTNASTNSTSVTSSTATVVS). A compositionally biased stretch (low complexity) spans 468–486 (TNASTNSTSVTSSTATVVS).

Belongs to the Su(H) family. Interacts with activated NOTCH1, NOTCH2 or NOTCH3. Interacts with MINT/SHARP. This interaction may mediate the recruitment of large corepressor complexes containing proteins such as HDAC1, HDAC2, NCOR2, SAP30, FHL1/KYOT2 and CIR1. Interacts with EP300, MAML1 and PTF1A. Interacts with RITA1, leading to nuclear export, prevent the interaction between RBPJ and NICD product and subsequent down-regulation of the Notch signaling pathway. Interacts with SNW1. Interacts with CHCHD2 and CXXC5. Interacts with BEND6 (via BEN domain). Interacts with NKAPL. Interacts with ZMIZ1. Interacts with RBM15. Interacts with L3MBTL3 and KDM1A; the interaction with KDM1A is weaker in the absence of L3MBTL3 and the interaction with L3MBTL3 is impaired by Notch-derived peptides containing the intracellular domain (NICD).

Its subcellular location is the nucleus. It is found in the cytoplasm. Its function is as follows. Transcriptional regulator that plays a central role in Notch signaling, a signaling pathway involved in cell-cell communication that regulates a broad spectrum of cell-fate determinations. Acts as a transcriptional repressor when it is not associated with Notch proteins. When associated with some NICD product of Notch proteins (Notch intracellular domain), it acts as a transcriptional activator that activates transcription of Notch target genes. Probably represses or activates transcription via the recruitment of chromatin remodeling complexes containing histone deacetylase or histone acetylase proteins, respectively. Specifically binds to the immunoglobulin kappa-type J segment recombination signal sequence. Binds specifically to methylated DNA. Binds to the oxygen responsive element of COX4I2 and activates its transcription under hypoxia conditions (4% oxygen). Negatively regulates the phagocyte oxidative burst in response to bacterial infection by repressing transcription of NADPH oxidase subunits. In Pongo abelii (Sumatran orangutan), this protein is Recombining binding protein suppressor of hairless (RBPJ).